We begin with the raw amino-acid sequence, 98 residues long: MKINQLAVASTLESGDVMIRIAPLDTQDIDLQINSSIEKQFGEAIRATILEVLSRYDVRGVQLNVDDKGALDCILRARLETLLARASGIAALPWEDRQ.

Residue S14 is modified to O-(phosphoribosyl dephospho-coenzyme A)serine.

This sequence belongs to the CitD family. In terms of assembly, oligomer with a subunit composition of (alpha,beta,gamma)6.

The protein localises to the cytoplasm. Its function is as follows. Covalent carrier of the coenzyme of citrate lyase. This is Citrate lyase acyl carrier protein 1 from Salmonella paratyphi A (strain ATCC 9150 / SARB42).